We begin with the raw amino-acid sequence, 542 residues long: Mitochondrial distribution and morphology protein 34 (542 aa).

The SMP-LTD domain occupies 1–216; the sequence is MSFRFNKGAF…LPSVIFSMSQ (216 aa). 2 disordered regions span residues 27–58 and 372–435; these read LNSKTQSSSQTAPANTTNSAATDEVKQETRGP and SSGD…TTAV. Residues 31 to 48 show a composition bias toward low complexity; that stretch reads TQSSSQTAPANTTNSAAT. Residues 49–58 show a composition bias toward basic and acidic residues; it reads DEVKQETRGP. Over residues 379–394 the composition is skewed to basic residues; it reads IRRRKIKMGKKSKSKK. The span at 403-414 shows a compositional bias: low complexity; sequence SSPTVVMPSSPS.

This sequence belongs to the MDM34 family. In terms of assembly, component of the ER-mitochondria encounter structure (ERMES) or MDM complex, composed of MMM1, MDM10, MDM12 and MDM34.

The protein resides in the mitochondrion outer membrane. Its function is as follows. Component of the ERMES/MDM complex, which serves as a molecular tether to connect the endoplasmic reticulum (ER) and mitochondria. Components of this complex are involved in the control of mitochondrial shape and protein biogenesis, and function in nonvesicular lipid trafficking between the ER and mitochondria. MDM34 is required for the interaction of the ER-resident membrane protein MMM1 and the outer mitochondrial membrane-resident beta-barrel protein MDM10. The chain is Mitochondrial distribution and morphology protein 34 from Lachancea thermotolerans (strain ATCC 56472 / CBS 6340 / NRRL Y-8284) (Yeast).